The sequence spans 708 residues: Prolyl 3-hydroxylase 2 (708 aa).

A signal peptide spans Met-1–Gly-24. TPR repeat units follow at residues Phe-44 to Leu-77, Arg-148 to His-181, His-210 to Glu-243, and Pro-306 to Asp-339. Residues Asn-449 and Asn-549 are each glycosylated (N-linked (GlcNAc...) asparagine). Residues Thr-557–Leu-671 form the Fe2OG dioxygenase domain. Residues His-580, Asp-582, and His-652 each contribute to the Fe cation site. Arg-662 is a catalytic residue. Residues Lys-705–Leu-708 carry the Prevents secretion from ER motif.

This sequence belongs to the leprecan family. The cofactor is Fe cation. It depends on L-ascorbate as a cofactor. In terms of tissue distribution, expression localized to the epithelia of bile ducts and to the sacroplasm of heart muscle and skeletal muscle. In the pancreas, localized to a subpopulation of Langerhans islet cells and in the salivary gland, expressed in acinar cells (at protein level). Expressed in adult heart, placenta, lung, liver, skeletal muscle and kidney. Detected in fetal heart, spleen, lung, liver skeletal muscle and kidney.

It is found in the endoplasmic reticulum. It localises to the sarcoplasmic reticulum. Its subcellular location is the golgi apparatus. The enzyme catalyses L-prolyl-[collagen] + 2-oxoglutarate + O2 = trans-3-hydroxy-L-prolyl-[collagen] + succinate + CO2. With respect to regulation, inhibited by pyridine 2,4-dicarboxylate, an analog of 2-oxoglutarate. Its function is as follows. Prolyl 3-hydroxylase that catalyzes the post-translational formation of 3-hydroxyproline on collagens. Contributes to proline 3-hydroxylation of collagen COL4A1 and COL1A1 in tendons, the eye sclera and in the eye lens capsule. Has high activity with the type IV collagen COL4A1, and lower activity with COL1A1. Catalyzes hydroxylation of the first Pro in Gly-Pro-Hyp sequences where Hyp is 4-hydroxyproline. Has no activity on substrates that lack 4-hydroxyproline in the third position. This Homo sapiens (Human) protein is Prolyl 3-hydroxylase 2.